A 268-amino-acid polypeptide reads, in one-letter code: Ribosomal RNA small subunit methyltransferase A (268 aa).

S-adenosyl-L-methionine-binding residues include Asn-17, Leu-19, Gly-44, Glu-65, Asp-89, and Asn-110.

The protein belongs to the class I-like SAM-binding methyltransferase superfamily. rRNA adenine N(6)-methyltransferase family. RsmA subfamily.

The protein localises to the cytoplasm. It catalyses the reaction adenosine(1518)/adenosine(1519) in 16S rRNA + 4 S-adenosyl-L-methionine = N(6)-dimethyladenosine(1518)/N(6)-dimethyladenosine(1519) in 16S rRNA + 4 S-adenosyl-L-homocysteine + 4 H(+). Functionally, specifically dimethylates two adjacent adenosines (A1518 and A1519) in the loop of a conserved hairpin near the 3'-end of 16S rRNA in the 30S particle. May play a critical role in biogenesis of 30S subunits. The sequence is that of Ribosomal RNA small subunit methyltransferase A from Acidithiobacillus ferrooxidans (strain ATCC 53993 / BNL-5-31) (Leptospirillum ferrooxidans (ATCC 53993)).